The sequence spans 272 residues: L-aspartate dehydrogenase (272 aa).

NAD(+) contacts are provided by Ala-125 and Asn-192. Residue His-222 is part of the active site.

Belongs to the L-aspartate dehydrogenase family.

It catalyses the reaction L-aspartate + NADP(+) + H2O = oxaloacetate + NH4(+) + NADPH + H(+). It carries out the reaction L-aspartate + NAD(+) + H2O = oxaloacetate + NH4(+) + NADH + H(+). Its pathway is cofactor biosynthesis; NAD(+) biosynthesis; iminoaspartate from L-aspartate (dehydrogenase route): step 1/1. Functionally, specifically catalyzes the NAD or NADP-dependent dehydrogenation of L-aspartate to iminoaspartate. The polypeptide is L-aspartate dehydrogenase (Nitrosopumilus maritimus (strain SCM1)).